The sequence spans 485 residues: GTPase Der (485 aa).

2 EngA-type G domains span residues 3–167 and 176–349; these read PTIA…PEPE and PVFA…NAAM. Residues 9–16, 56–60, 119–122, 182–189, 229–233, and 294–297 each bind GTP; these read GRPNVGKS, DTGGF, NKGE, DTAGV, and NKWD. A KH-like domain is found at 350–434; the sequence is IKMPTPKITR…PLRIQYNVSE (85 aa). Residues 435 to 485 form a disordered region; sequence NPYENAEDKPKKKPLRRVSLSNRIEKREGRKEEKNRFKKKTKVSVKKQFSK. Positions 457–469 are enriched in basic and acidic residues; the sequence is RIEKREGRKEEKN. Residues 470–485 are compositionally biased toward basic residues; it reads RFKKKTKVSVKKQFSK.

The protein belongs to the TRAFAC class TrmE-Era-EngA-EngB-Septin-like GTPase superfamily. EngA (Der) GTPase family. As to quaternary structure, associates with the 50S ribosomal subunit.

Its function is as follows. GTPase that plays an essential role in the late steps of ribosome biogenesis. The polypeptide is GTPase Der (Neisseria meningitidis serogroup C / serotype 2a (strain ATCC 700532 / DSM 15464 / FAM18)).